Consider the following 850-residue polypeptide: Envelope glycoprotein gp160 (850 aa).

The first 28 residues, 1 to 28 (METQTSWLSLWRWGLMIFGMLMICSARE), serve as a signal peptide directing secretion. The Extracellular portion of the chain corresponds to 29–678 (NLWVTVYYGV…ISNWLWYIKI (650 aa)). C50 and C70 are disulfide-bonded. 19 N-linked (GlcNAc...) asparagine; by host glycosylation sites follow: N84, N126, N133, N134, N139, N152, N156, N184, N193, N226, N230, N237, N258, N272, N285, N297, N327, N334, and N349. Disulfide bonds link C115–C201, C122–C192, C127–C153, C214–C243, and C224–C235. The V1 stretch occupies residues 127–152 (CSDVNSNNSTDSNSSASNNSPEIMKN). Positions 153 to 192 (CSFNVTTEIRNKRKQEYALFYRQDVVPINSDNKSYILINC) are V2. The interval 292–325 (CTRPNNNTRKGIHMGPGQVLYATGEIIGDIRKAY) is V3. Residues C292 and C326 are joined by a disulfide bond. Positions 357–367 (PSGGDIEITTH) are CD4-binding loop. 2 disulfides stabilise this stretch: C371-C436 and C378-C409. The segment at 378–409 (CNTSTLFNSSWDENNIKDTNSTNDNTTITIPC) is V4. N-linked (GlcNAc...) asparagine; by host glycans are attached at residues N379, N385, N397, N402, N433, N439, N453, and N457. The tract at residues 447–467 (RDGGNRNGSENGTETFRPTGG) is disordered. A compositionally biased stretch (polar residues) spans 453–462 (NGSENGTETF). V5 regions lie at residues 453 to 465 (NGSENGTETFRPT) and 454 to 465 (GSENGTETFRPT). Residues 506–526 (AVGIGAVFLGFLGTAGSTMGA) are fusion peptide. The interval 568–586 (KQLQARVLAVERYLKDQQL) is immunosuppression. The cysteines at positions 592 and 598 are disulfide-linked. N-linked (GlcNAc...) asparagine; by host glycans are attached at residues N605, N610, N619, N631, and N668. Positions 627–661 (REINNYTGIIYSLIEEAQNQQETNEKDLLALDKWT) form a coiled coil. An MPER; binding to GalCer region spans residues 656–677 (ALDKWTNLWNWFNISNWLWYIK). The helical transmembrane segment at 679–699 (FIMIIGGLIGLRIIFAVLAIV) threads the bilayer. The Cytoplasmic portion of the chain corresponds to 700–850 (NRVRQGYSPL…IRQGLERALL (151 aa)). Residues 706–709 (YSPL) carry the YXXL motif; contains endocytosis signal motif. Residue C758 is the site of S-palmitoyl cysteine; by host attachment. The Di-leucine internalization motif motif lies at 849–850 (LL).

This sequence belongs to the HIV-1 env protein family. As to quaternary structure, the mature envelope protein (Env) consists of a homotrimer of non-covalently associated gp120-gp41 heterodimers. The resulting complex protrudes from the virus surface as a spike. There seems to be as few as 10 spikes on the average virion. Interacts with host CD4, CCR5 and CXCR4. Gp120 also interacts with the C-type lectins CD209/DC-SIGN and CLEC4M/DC-SIGNR (collectively referred to as DC-SIGN(R)). Gp120 and gp41 interact with GalCer. Gp120 interacts with host ITGA4/ITGB7 complex; on CD4+ T-cells, this interaction results in rapid activation of integrin ITGAL/LFA-1, which facilitates efficient cell-to-cell spreading of HIV-1. Gp120 interacts with cell-associated heparan sulfate; this interaction increases virus infectivity on permissive cells and may be involved in infection of CD4- cells. The mature envelope protein (Env) consists of a homotrimer of non-covalently associated gp120-gp41 heterodimers. The resulting complex protrudes from the virus surface as a spike. There seems to be as few as 10 spikes on the average virion. In terms of processing, highly glycosylated by host. The high number of glycan on the protein is reffered to as 'glycan shield' because it contributes to hide protein sequence from adaptive immune system. Palmitoylation of the transmembrane protein and of Env polyprotein (prior to its proteolytic cleavage) is essential for their association with host cell membrane lipid rafts. Palmitoylation is therefore required for envelope trafficking to classical lipid rafts, but not for viral replication. Post-translationally, specific enzymatic cleavages in vivo yield mature proteins. Envelope glycoproteins are synthesized as an inactive precursor that is heavily N-glycosylated and processed likely by host cell furin in the Golgi to yield the mature SU and TM proteins. The cleavage site between SU and TM requires the minimal sequence [KR]-X-[KR]-R. About 2 of the 9 disulfide bonds of gp41 are reduced by P4HB/PDI, following binding to CD4 receptor.

It is found in the virion membrane. It localises to the host cell membrane. Its subcellular location is the host endosome membrane. Oligomerizes in the host endoplasmic reticulum into predominantly trimers. In a second time, gp160 transits in the host Golgi, where glycosylation is completed. The precursor is then proteolytically cleaved in the trans-Golgi and thereby activated by cellular furin or furin-like proteases to produce gp120 and gp41. Functionally, attaches the virus to the host lymphoid cell by binding to the primary receptor CD4. This interaction induces a structural rearrangement creating a high affinity binding site for a chemokine coreceptor like CXCR4 and/or CCR5. Acts as a ligand for CD209/DC-SIGN and CLEC4M/DC-SIGNR, which are respectively found on dendritic cells (DCs), and on endothelial cells of liver sinusoids and lymph node sinuses. These interactions allow capture of viral particles at mucosal surfaces by these cells and subsequent transmission to permissive cells. HIV subverts the migration properties of dendritic cells to gain access to CD4+ T-cells in lymph nodes. Virus transmission to permissive T-cells occurs either in trans (without DCs infection, through viral capture and transmission), or in cis (following DCs productive infection, through the usual CD4-gp120 interaction), thereby inducing a robust infection. In trans infection, bound virions remain infectious over days and it is proposed that they are not degraded, but protected in non-lysosomal acidic organelles within the DCs close to the cell membrane thus contributing to the viral infectious potential during DCs' migration from the periphery to the lymphoid tissues. On arrival at lymphoid tissues, intact virions recycle back to DCs' cell surface allowing virus transmission to CD4+ T-cells. Its function is as follows. Acts as a class I viral fusion protein. Under the current model, the protein has at least 3 conformational states: pre-fusion native state, pre-hairpin intermediate state, and post-fusion hairpin state. During fusion of viral and target intracellular membranes, the coiled coil regions (heptad repeats) assume a trimer-of-hairpins structure, positioning the fusion peptide in close proximity to the C-terminal region of the ectodomain. The formation of this structure appears to drive apposition and subsequent fusion of viral and target cell membranes. Complete fusion occurs in host cell endosomes and is dynamin-dependent, however some lipid transfer might occur at the plasma membrane. The virus undergoes clathrin-dependent internalization long before endosomal fusion, thus minimizing the surface exposure of conserved viral epitopes during fusion and reducing the efficacy of inhibitors targeting these epitopes. Membranes fusion leads to delivery of the nucleocapsid into the cytoplasm. In Human immunodeficiency virus type 1 group M subtype J (isolate SE9173) (HIV-1), this protein is Envelope glycoprotein gp160.